The primary structure comprises 448 residues: Phosphoglucosamine mutase (448 aa).

Serine 100 acts as the Phosphoserine intermediate in catalysis. Mg(2+)-binding residues include serine 100, aspartate 240, aspartate 242, and aspartate 244. Position 100 is a phosphoserine (serine 100).

Belongs to the phosphohexose mutase family. Requires Mg(2+) as cofactor. Activated by phosphorylation.

It catalyses the reaction alpha-D-glucosamine 1-phosphate = D-glucosamine 6-phosphate. Its function is as follows. Catalyzes the conversion of glucosamine-6-phosphate to glucosamine-1-phosphate. The protein is Phosphoglucosamine mutase of Alkaliphilus metalliredigens (strain QYMF).